Reading from the N-terminus, the 196-residue chain is ATP-dependent Clp protease proteolytic subunit (196 aa).

The active-site Nucleophile is S98. The active site involves H123.

The protein belongs to the peptidase S14 family. Fourteen ClpP subunits assemble into 2 heptameric rings which stack back to back to give a disk-like structure with a central cavity, resembling the structure of eukaryotic proteasomes.

The protein resides in the cytoplasm. The enzyme catalyses Hydrolysis of proteins to small peptides in the presence of ATP and magnesium. alpha-casein is the usual test substrate. In the absence of ATP, only oligopeptides shorter than five residues are hydrolyzed (such as succinyl-Leu-Tyr-|-NHMec, and Leu-Tyr-Leu-|-Tyr-Trp, in which cleavage of the -Tyr-|-Leu- and -Tyr-|-Trp bonds also occurs).. Functionally, cleaves peptides in various proteins in a process that requires ATP hydrolysis. Has a chymotrypsin-like activity. Plays a major role in the degradation of misfolded proteins. The polypeptide is ATP-dependent Clp protease proteolytic subunit (Geobacillus sp. (strain WCH70)).